A 536-amino-acid polypeptide reads, in one-letter code: Glutamyl-tRNA(Gln) amidotransferase subunit B, mitochondrial (536 aa).

Belongs to the GatB/GatE family. GatB subfamily. Subunit of the heterotrimeric GatFAB amidotransferase (AdT) complex, composed of A, B and F subunits.

The protein resides in the mitochondrion. The catalysed reaction is L-glutamyl-tRNA(Gln) + L-glutamine + ATP + H2O = L-glutaminyl-tRNA(Gln) + L-glutamate + ADP + phosphate + H(+). Its function is as follows. Allows the formation of correctly charged Gln-tRNA(Gln) through the transamidation of misacylated Glu-tRNA(Gln) in the mitochondria. The reaction takes place in the presence of glutamine and ATP through an activated gamma-phospho-Glu-tRNA(Gln). The protein is Glutamyl-tRNA(Gln) amidotransferase subunit B, mitochondrial of Vanderwaltozyma polyspora (strain ATCC 22028 / DSM 70294 / BCRC 21397 / CBS 2163 / NBRC 10782 / NRRL Y-8283 / UCD 57-17) (Kluyveromyces polysporus).